Reading from the N-terminus, the 495-residue chain is Probable cobyric acid synthase (495 aa).

In terms of domain architecture, GATase cobBQ-type spans 256–441; it reads DVDIAVIRLT…LHGLFDNVNI (186 aa). Cys334 acts as the Nucleophile in catalysis. The active site involves His433.

It belongs to the CobB/CobQ family. CobQ subfamily.

The protein operates within cofactor biosynthesis; adenosylcobalamin biosynthesis. In terms of biological role, catalyzes amidations at positions B, D, E, and G on adenosylcobyrinic A,C-diamide. NH(2) groups are provided by glutamine, and one molecule of ATP is hydrogenolyzed for each amidation. The chain is Probable cobyric acid synthase from Methanococcoides burtonii (strain DSM 6242 / NBRC 107633 / OCM 468 / ACE-M).